Here is a 606-residue protein sequence, read N- to C-terminus: MKKTLLAVALAPLCLPSQVFAADESSNDVMVVTANRFEQPIKNVIAPISVVTKEEIDAIQAKSIAEVLRRLPGVQVVSGGYGQATEVYVRGTTSRHLLVMINGVRIGSATLGSADFSQIPLTGIERIELIRGSRAALYGSDAIGGVLNIITAYQPGESVAEVTAGGGSDGFYQLGGSVAGGLGESGWGKIALKTEGADGFSARKEPFEQDDDGFKNSNVVAEVGTHVGDHWKLSLQGYYHDGESDYDDSYGAPHAQSESSLFNIAAKAGYSNDKLDSQFTVAQNQDENRNFNDVSSGSKIKTERTVANWQNHYQLTDGLELGGGLEWYRDSVSNTGTQYAEDERDNTAVYLTSIYRISDWQFEGSVRTDDNDSYGTNNTWQLATAYNITSELKVSANAGTGFKAPTFNDLYWPDSGNPNLKPEESKNYEISLSGTHQLLDWSITGYQSEIDQLIAWAPKDASNPSGDWIPMNVDEAEIQGIELTAGFATGMLYHDVSYDYLDAKDKGLDKQLIRRSKDSAKWNVSYLAEQWQLDVSAIYKGTSYDDAANTKKLDAYTLVDIAASYFVTDNLSVRGRIANLFDKDYVAKETYNVQERSYYATATYKF.

A signal peptide spans 1–21; it reads MKKTLLAVALAPLCLPSQVFA. The TonB box motif lies at 28 to 35; that stretch reads DVMVVTAN. Residues 40–152 form the TBDR plug domain; the sequence is PIKNVIAPIS…IGGVLNIITA (113 aa). Positions 157-606 constitute a TBDR beta-barrel domain; that stretch reads ESVAEVTAGG…SYYATATYKF (450 aa). The TonB C-terminal box signature appears at 589-606; sequence ETYNVQERSYYATATYKF.

Belongs to the TonB-dependent receptor family. BtuB (TC 1.B.14.3.1) subfamily.

The protein localises to the cell outer membrane. Functionally, involved in the active translocation of vitamin B12 (cyanocobalamin) across the outer membrane to the periplasmic space. It derives its energy for transport by interacting with the trans-periplasmic membrane protein TonB. The chain is Vitamin B12 transporter BtuB from Photobacterium profundum (strain SS9).